The sequence spans 358 residues: tRNA-specific 2-thiouridylase MnmA (358 aa).

Residues 8-15 (GMSGGVDS) and M34 each bind ATP. C103 (nucleophile) is an active-site residue. C103 and C199 are oxidised to a cystine. Residue G127 participates in ATP binding. The tract at residues 149-151 (KDQ) is interaction with tRNA. The active-site Cysteine persulfide intermediate is the C199. Positions 305–306 (RY) are interaction with tRNA.

The protein belongs to the MnmA/TRMU family.

Its subcellular location is the cytoplasm. The enzyme catalyses S-sulfanyl-L-cysteinyl-[protein] + uridine(34) in tRNA + AH2 + ATP = 2-thiouridine(34) in tRNA + L-cysteinyl-[protein] + A + AMP + diphosphate + H(+). Functionally, catalyzes the 2-thiolation of uridine at the wobble position (U34) of tRNA, leading to the formation of s(2)U34. The protein is tRNA-specific 2-thiouridylase MnmA of Clostridium beijerinckii (strain ATCC 51743 / NCIMB 8052) (Clostridium acetobutylicum).